The chain runs to 280 residues: 4-diphosphocytidyl-2-C-methyl-D-erythritol kinase (280 aa).

The active site involves lysine 8. An ATP-binding site is contributed by 91-101 (PVAAGLAGGSS). Aspartate 133 is an active-site residue.

The protein belongs to the GHMP kinase family. IspE subfamily.

The catalysed reaction is 4-CDP-2-C-methyl-D-erythritol + ATP = 4-CDP-2-C-methyl-D-erythritol 2-phosphate + ADP + H(+). The protein operates within isoprenoid biosynthesis; isopentenyl diphosphate biosynthesis via DXP pathway; isopentenyl diphosphate from 1-deoxy-D-xylulose 5-phosphate: step 3/6. In terms of biological role, catalyzes the phosphorylation of the position 2 hydroxy group of 4-diphosphocytidyl-2C-methyl-D-erythritol. This is 4-diphosphocytidyl-2-C-methyl-D-erythritol kinase from Clostridium kluyveri (strain NBRC 12016).